The following is a 114-amino-acid chain: MSEVIEGNVKIDRISPGDGATFPKTGDLVTIHYTGTLENGQKFDSSVDRGSPFQCNIGVGQVIKGWDVGIPKLSVGEKARLTIPGPYAYGPRGFPGLIPPNSTLVFDVELLKVN.

S2 is subject to N-acetylserine. Residues 26–114 (GDLVTIHYTG…VFDVELLKVN (89 aa)) enclose the PPIase FKBP-type domain. S51 carries the phosphoserine modification.

Belongs to the FKBP-type PPIase family. FKBP1 subfamily. Interacts with HOM3; the interaction is direct, plays a role in feedback inhibition of aspartokinase by threonine, and is inhibited by tacrolimus and sirolimus. Interacts with HMO1. Interacts with FAP1.

The protein localises to the cytoplasm. It is found in the mitochondrion. It catalyses the reaction [protein]-peptidylproline (omega=180) = [protein]-peptidylproline (omega=0). Its function is as follows. PPIases accelerate the folding of proteins. It catalyzes the cis-trans isomerization of proline imidic peptide bonds in oligopeptides. Plays a role in feedback inhibition of the pathway synthesizing the aspartate family of amino acids by binding to aspartokinase. The sequence is that of FK506-binding protein 1 (FPR1) from Saccharomyces cerevisiae (strain ATCC 204508 / S288c) (Baker's yeast).